Here is a 508-residue protein sequence, read N- to C-terminus: Heat shock 70 kDa protein 14 (508 aa).

The protein belongs to the heat shock protein 70 family. As to quaternary structure, component of ribosome-associated complex (RAC).

The protein resides in the cytoplasm. The protein localises to the cytosol. Its function is as follows. Component of the ribosome-associated complex (RAC), a complex involved in folding or maintaining nascent polypeptides in a folding-competent state. The polypeptide is Heat shock 70 kDa protein 14 (hspa14) (Xenopus tropicalis (Western clawed frog)).